The chain runs to 209 residues: Imidazole glycerol phosphate synthase subunit HisH (209 aa).

The Glutamine amidotransferase type-1 domain occupies M1–S205. The active-site Nucleophile is C79. Active-site residues include H180 and E182.

In terms of assembly, heterodimer of HisH and HisF.

The protein localises to the cytoplasm. It catalyses the reaction 5-[(5-phospho-1-deoxy-D-ribulos-1-ylimino)methylamino]-1-(5-phospho-beta-D-ribosyl)imidazole-4-carboxamide + L-glutamine = D-erythro-1-(imidazol-4-yl)glycerol 3-phosphate + 5-amino-1-(5-phospho-beta-D-ribosyl)imidazole-4-carboxamide + L-glutamate + H(+). The catalysed reaction is L-glutamine + H2O = L-glutamate + NH4(+). It functions in the pathway amino-acid biosynthesis; L-histidine biosynthesis; L-histidine from 5-phospho-alpha-D-ribose 1-diphosphate: step 5/9. IGPS catalyzes the conversion of PRFAR and glutamine to IGP, AICAR and glutamate. The HisH subunit catalyzes the hydrolysis of glutamine to glutamate and ammonia as part of the synthesis of IGP and AICAR. The resulting ammonia molecule is channeled to the active site of HisF. The sequence is that of Imidazole glycerol phosphate synthase subunit HisH from Bacillus mycoides (strain KBAB4) (Bacillus weihenstephanensis).